The following is a 417-amino-acid chain: MTGTLPTQFKDSDLSPLTRPNTLGRFGKYGGQYVPETLIPALIELEQAAKEAWKDSSFNSELNHLLKTYVGRSTPLYEATRLTEHYRKNTLKGPRIWLKREDLNHTGAHKINNALGQALLAIRMGKKRIIAETGAGQHGVATATVCARFGLECIIYMGKEDMRRQALNVFRMQLLGASVRPVTSGTATLKDATSEAIRDWVTNVETTHYILGSVAGPHPYPMLVRDFHAVIGEETKQQCKQAFGRSPDVLLACVGGGSNAMGLFHSFVEDKSVRMIGVEAAGDGVETGRHAATITEGRIGVLHGAMSLLLQDKDGQVEEAHSISAGLDYPGVGPEHSYLKEIGRAEYAAVTDTEAIEALQLVSKLEGIIPALETAHAFAYLEKLCPTLNHNSEIVINCSGRGDKDVNTVAEKLGSEI.

K110 is modified (N6-(pyridoxal phosphate)lysine).

The protein belongs to the TrpB family. In terms of assembly, tetramer of two alpha and two beta chains. Pyridoxal 5'-phosphate serves as cofactor.

The catalysed reaction is (1S,2R)-1-C-(indol-3-yl)glycerol 3-phosphate + L-serine = D-glyceraldehyde 3-phosphate + L-tryptophan + H2O. It functions in the pathway amino-acid biosynthesis; L-tryptophan biosynthesis; L-tryptophan from chorismate: step 5/5. The beta subunit is responsible for the synthesis of L-tryptophan from indole and L-serine. This is Tryptophan synthase beta chain from Prochlorococcus marinus (strain NATL2A).